A 328-amino-acid polypeptide reads, in one-letter code: Ornithine transcarbamylase, mitochondrial (328 aa).

A mitochondrion-targeting transit peptide spans Gly-1–Gln-6. N6-acetyllysine; alternate is present on Lys-44. Lys-44 carries the post-translational modification N6-succinyllysine; alternate. Lys-54 bears the N6-succinyllysine mark. The residue at position 62 (Lys-62) is an N6-acetyllysine; alternate. N6-succinyllysine; alternate is present on Lys-62. Position 64–68 (Ser-64–Arg-68) interacts with carbamoyl phosphate. Ser-107 bears the Phosphoserine mark. Arg-115 is a binding site for carbamoyl phosphate. Residue Arg-115 participates in L-ornithine binding. Position 118 is an N6-acetyllysine; alternate (Lys-118). Lys-118 bears the N6-succinyllysine; alternate mark. His-142 provides a ligand contact to carbamoyl phosphate. Residue Asn-173 participates in L-ornithine binding. Lys-195, Lys-205, and Lys-212 each carry N6-acetyllysine; alternate. An N6-succinyllysine; alternate mark is found at Lys-195, Lys-205, and Lys-212. L-ornithine is bound at residue Asp-237–Ser-241. An N6-succinyllysine mark is found at Lys-248 and Lys-263. Residue His-276–Pro-279 participates in L-ornithine binding. Residue Cys-277 is part of the active site. Lys-281 is subject to N6-acetyllysine; alternate. Lys-281 is modified (N6-succinyllysine; alternate). Arg-304 is a carbamoyl phosphate binding site. An L-ornithine-binding site is contributed by Arg-304.

The protein belongs to the aspartate/ornithine carbamoyltransferase superfamily. OTCase family. Homotrimer. Post-translationally, acetylation at Lys-62 negatively regulates ornithine carbamoyltransferase activity in response to nutrient signals.

It localises to the mitochondrion matrix. The catalysed reaction is carbamoyl phosphate + L-ornithine = L-citrulline + phosphate + H(+). It functions in the pathway nitrogen metabolism; urea cycle; L-citrulline from L-ornithine and carbamoyl phosphate: step 1/1. Negatively regulated by lysine acetylation. Functionally, catalyzes the second step of the urea cycle, the condensation of carbamoyl phosphate with L-ornithine to form L-citrulline. The urea cycle ensures the detoxification of ammonia by converting it to urea for excretion. This is Ornithine transcarbamylase, mitochondrial from Sus scrofa (Pig).